The primary structure comprises 79 residues: uncharacterized protein (79 aa).

Residues 1-33 (MRFIIRTVMLIALVWIGLLLSGYGVLIGSKENA) form the signal peptide.

This is an uncharacterized protein from Escherichia coli O157:H7.